Reading from the N-terminus, the 417-residue chain is MIIFNGNKYACASCIRGHRSSTCRHSHRMLIKVRTRGRPSPMAIRDAILVDSTSQSTEYENGAQIEGDCCSAMNQQPILFVRASAVRKARMINGKLHILMEEGFTAHEPKDISTFTDDGNKYITETEFLRKHSPKAPATGTISPDSTKSSSSSEKKERSRLQQEPIRHFSNCCKKDKSQNPASNGKTNKAPSDDIFTPYGSLESTSAFNDILQENYNSSVPGAHDSSETLTPQSTTTIAAPHSSDVASKVEVLTHKGIFLSTQCSCEDESCPCVNCLIHRSEEELNSYIQQSGVPLTNIGEAQITDKMMDYLDDCKCTDKECICPPDNCTCDGCFSHSTNIIPFEKFFFYGILNARLTRKTQIKFKGKLVPSKYWWDFLKLQVPLMTDAQLELLDIHAWFQKLVSNYAPHLSDATTS.

The segment at residues 1 to 40 (MIIFNGNKYACASCIRGHRSSTCRHSHRMLIKVRTRGRPS) is a DNA-binding region (copper-fist). Residues Cys11, Cys14, Cys23, and His25 each contribute to the Zn(2+) site. Disordered stretches follow at residues 128-198 (FLRK…IFTP) and 216-242 (YNSS…AAPH). Ser143 carries the post-translational modification Phosphoserine. Residues 153–178 (SEKKERSRLQQEPIRHFSNCCKKDKS) are compositionally biased toward basic and acidic residues. Polar residues-rich tracts occupy residues 179–190 (QNPASNGKTNKA) and 228–238 (ETLTPQSTTTI). Repeat copies occupy residues 264 to 279 (CSCE…CLIH) and 322 to 337 (CICP…CFSH). Residues 264–337 (CSCEDESCPC…NCTCDGCFSH (74 aa)) are 2 X 16 AA repeat of C-X-C-X(4)-C-X-C-X-X-C-X-X-H.

It is found in the nucleus. Functionally, regulatory protein involved in Cu/Fe utilization and stress resistance. Involved in basal level transcription of FRE1 and H(2)O(2)-induced transcription of CTT1. Regulates the transcription of CTR1 and CTR3 via the copper ion responsive elements in their promoters. Required for degradation of CTR1. This chain is Metal-binding activator 1 (MAC1), found in Saccharomyces cerevisiae (strain ATCC 204508 / S288c) (Baker's yeast).